The following is a 246-amino-acid chain: Flavin-dependent thymidylate synthase (246 aa).

A ThyX domain is found at 17–241 (VTVELVKHSA…PLTYAAFNTN (225 aa)). FAD-binding positions include Ser69, 92–94 (RHR), and Glu101. Residues 89 to 92 (EFMR), 101 to 105 (EESGR), and Arg173 each bind dUMP. The ThyX motif motif lies at 92–103 (RHRVGWSYNEES). Residues 189–191 (NAR) and His195 each bind FAD. Arg200 provides a ligand contact to dUMP. The active-site Involved in ionization of N3 of dUMP, leading to its activation is the Arg200.

Belongs to the thymidylate synthase ThyX family. As to quaternary structure, homotetramer. FAD is required as a cofactor.

The catalysed reaction is dUMP + (6R)-5,10-methylene-5,6,7,8-tetrahydrofolate + NADPH + H(+) = dTMP + (6S)-5,6,7,8-tetrahydrofolate + NADP(+). The protein operates within pyrimidine metabolism; dTTP biosynthesis. Functionally, catalyzes the reductive methylation of 2'-deoxyuridine-5'-monophosphate (dUMP) to 2'-deoxythymidine-5'-monophosphate (dTMP) while utilizing 5,10-methylenetetrahydrofolate (mTHF) as the methyl donor, and NADPH and FADH(2) as the reductant. The protein is Flavin-dependent thymidylate synthase of Streptomyces avermitilis (strain ATCC 31267 / DSM 46492 / JCM 5070 / NBRC 14893 / NCIMB 12804 / NRRL 8165 / MA-4680).